We begin with the raw amino-acid sequence, 174 residues long: MESQVRQNFHKDCEAAINRQINLELYASYSYLSMAYYFDRDDVALPGFAHFFKHQSEEEREHAEKLMKQQNQRGGRIFLQDVKKPDRDEWGSGLDALECALQLEKNVNQSLLDLHKVCSEHNDPHMCDFLETHYLDEQVKSIKELGDWVTNLRRLGAPQNGMAEYLFDKHTLGK.

One can recognise a Ferritin-like diiron domain in the interval 7–156 (QNFHKDCEAA…DWVTNLRRLG (150 aa)). Residues Glu-24, Glu-59, His-62, Glu-104, and Gln-138 each coordinate Fe cation.

It belongs to the ferritin family. In liver, forms a heteromer consisting of middle and heavy subunits. The functional molecule forms a roughly spherical shell with a diameter of 12 nm and contains a central cavity into which the insoluble mineral iron core is deposited. Liver (at protein level).

It carries out the reaction 4 Fe(2+) + O2 + 4 H(+) = 4 Fe(3+) + 2 H2O. In terms of biological role, stores iron in a soluble, non-toxic, readily available form. Important for iron homeostasis. Has ferroxidase activity. Iron is taken up in the ferrous form and deposited as ferric hydroxides after oxidation. Also plays a role in delivery of iron to cells. Mediates iron uptake in capsule cells of the developing kidney. Delivery to lysosomes is mediated by the cargo receptor NCOA4 for autophagic degradation and release of iron. The polypeptide is Ferritin, heavy subunit (Trematomus newnesi (Dusky notothen)).